The chain runs to 492 residues: Probable glycogen synthase 2 (492 aa).

Lys-15 is a binding site for ADP-alpha-D-glucose.

This sequence belongs to the glycosyltransferase 1 family. Bacterial/plant glycogen synthase subfamily.

The enzyme catalyses [(1-&gt;4)-alpha-D-glucosyl](n) + ADP-alpha-D-glucose = [(1-&gt;4)-alpha-D-glucosyl](n+1) + ADP + H(+). The protein operates within glycan biosynthesis; glycogen biosynthesis. Synthesizes alpha-1,4-glucan chains using ADP-glucose. This Nostoc sp. (strain PCC 7120 / SAG 25.82 / UTEX 2576) protein is Probable glycogen synthase 2 (glgA2).